The chain runs to 231 residues: Platelet-activating factor acetylhydrolase IB subunit alpha1 (231 aa).

Ser-2 carries the N-acetylserine modification. Ser-2 is modified (phosphoserine). Catalysis depends on residues Ser-47, Asp-192, and His-195.

Belongs to the 'GDSL' lipolytic enzyme family. Platelet-activating factor acetylhydrolase IB beta/gamma subunits subfamily. Forms a catalytic dimer which is either homodimer (alpha1/alpha1 homodimer) or heterodimer with PAFAH1B2 (alpha1/alpha2 heterodimer). Component of the cytosolic (PAF-AH (I)) heterotetrameric enzyme, which is composed of PAFAH1B1 (beta), PAFAH1B2 (alpha2) and PAFAH1B3 (alpha1) subunits. The catalytic activity of the enzyme resides in the alpha1 (PAFAH1B3) and alpha2 (PAFAH1B2) subunits, whereas the beta subunit (PAFAH1B1) has regulatory activity. Trimer formation is not essential for the catalytic activity. Interacts with VLDLR; this interaction may modulate the Reelin pathway.

It localises to the cytoplasm. It carries out the reaction a 1-O-alkyl-2-acetyl-sn-glycero-3-phosphocholine + H2O = a 1-O-alkyl-sn-glycero-3-phosphocholine + acetate + H(+). The catalysed reaction is 1-O-hexadecyl-2-acetyl-sn-glycero-3-phosphocholine + H2O = 1-O-hexadecyl-sn-glycero-3-phosphocholine + acetate + H(+). It catalyses the reaction 1-O-hexadecyl-2-acetyl-sn-glycero-3-phosphate + H2O = 1-O-hexadecyl-sn-glycero-3-phosphate + acetate + H(+). With respect to regulation, beta subunit (PAFAH1B1) inhibits the acetylhydrolase activity of the alpha1/alpha1 catalytic homodimer. In terms of biological role, alpha1 catalytic subunit of the cytosolic type I platelet-activating factor (PAF) acetylhydrolase (PAF-AH (I)) heterotetrameric enzyme that catalyzes the hydrolyze of the acetyl group at the sn-2 position of PAF and its analogs and modulates the action of PAF. The activity and substrate specificity of PAF-AH (I) are affected by its subunit composition. Both alpha1/alpha1 homodimer (PAFAH1B3/PAFAH1B3 homodimer) and alpha1/alpha2 heterodimer(PAFAH1B3/PAFAH1B2 heterodimer) hydrolyze 1-O-alkyl-2-acetyl-sn-glycero-3-phosphoric acid (AAGPA) more efficiently than PAF, but they have little hydrolytic activity towards 1-O-alkyl-2-acetyl-sn-glycero-3-phosphorylethanolamine (AAGPE). Plays an important role during the development of brain. The sequence is that of Platelet-activating factor acetylhydrolase IB subunit alpha1 from Pongo abelii (Sumatran orangutan).